The sequence spans 277 residues: ATP-dependent Clp protease proteolytic subunit, mitochondrial (277 aa).

The N-terminal 56 residues, 1-56 (MWPGILVGGARVASCRYPALGPRLAAHFPAQRPPQRTLQNGLALQRCLHATATRAL), are a transit peptide targeting the mitochondrion. The Nucleophile role is filled by Ser153. His178 is an active-site residue. Lys200 carries the N6-succinyllysine modification. The residue at position 211 (Lys211) is an N6-acetyllysine. The interval 246-277 (VHPPQDGEDEPTLVQKEPVEAAPAAEPVPAST) is disordered. Over residues 265 to 277 (EAAPAAEPVPAST) the composition is skewed to low complexity.

It belongs to the peptidase S14 family. Fourteen CLPP subunits assemble into 2 heptameric rings which stack back to back to give a disk-like structure with a central cavity. Component of the ClpXP complex formed by the assembly of two CLPP heptameric rings with two CLPX hexameric rings, giving rise to a symmetrical structure with two central CLPP rings flanked by a CLPX ring at either end of the complex. As to expression, detected in liver (at protein level). Predominantly expressed in skeletal muscle. Intermediate levels in heart, liver and pancreas. Low in brain, placenta, lung and kidney.

The protein localises to the mitochondrion matrix. It carries out the reaction Hydrolysis of proteins to small peptides in the presence of ATP and magnesium. alpha-casein is the usual test substrate. In the absence of ATP, only oligopeptides shorter than five residues are hydrolyzed (such as succinyl-Leu-Tyr-|-NHMec, and Leu-Tyr-Leu-|-Tyr-Trp, in which cleavage of the -Tyr-|-Leu- and -Tyr-|-Trp bonds also occurs).. Functionally, protease component of the ClpXP complex that cleaves peptides and various proteins in an ATP-dependent process. Has low peptidase activity in the absence of CLPX. The ClpXP complex can degrade CSN1S1, CSN2 and CSN3, as well as synthetic peptides (in vitro) and may be responsible for a fairly general and central housekeeping function rather than for the degradation of specific substrates. Cleaves PINK1 in the mitochondrion. The polypeptide is ATP-dependent Clp protease proteolytic subunit, mitochondrial (Homo sapiens (Human)).